Reading from the N-terminus, the 573-residue chain is Phosphoenolpyruvate-protein phosphotransferase (573 aa).

The active-site Tele-phosphohistidine intermediate is His190. Residues Arg297 and Arg333 each contribute to the substrate site. Positions 432 and 456 each coordinate Mg(2+). 455–456 is a binding site for phosphoenolpyruvate; that stretch reads ND. Substrate is bound at residue Arg466. Cys503 serves as the catalytic Proton donor.

The protein belongs to the PEP-utilizing enzyme family. Homodimer. Requires Mg(2+) as cofactor.

It localises to the cytoplasm. The enzyme catalyses L-histidyl-[protein] + phosphoenolpyruvate = N(pros)-phospho-L-histidyl-[protein] + pyruvate. In terms of biological role, general (non sugar-specific) component of the phosphoenolpyruvate-dependent sugar phosphotransferase system (sugar PTS). This major carbohydrate active-transport system catalyzes the phosphorylation of incoming sugar substrates concomitantly with their translocation across the cell membrane. Enzyme I transfers the phosphoryl group from phosphoenolpyruvate (PEP) to the phosphoryl carrier protein (HPr). The protein is Phosphoenolpyruvate-protein phosphotransferase (ptsI) of Staphylococcus carnosus (strain TM300).